The following is a 312-amino-acid chain: Homoserine O-acetyltransferase (312 aa).

The active-site Acyl-thioester intermediate is the C142. Residues K163 and S192 each contribute to the substrate site. H235 functions as the Proton acceptor in the catalytic mechanism. The active site involves E237. Residue R249 participates in substrate binding.

This sequence belongs to the MetA family.

The protein localises to the cytoplasm. It catalyses the reaction L-homoserine + acetyl-CoA = O-acetyl-L-homoserine + CoA. The protein operates within amino-acid biosynthesis; L-methionine biosynthesis via de novo pathway; O-acetyl-L-homoserine from L-homoserine: step 1/1. Transfers an acetyl group from acetyl-CoA to L-homoserine, forming acetyl-L-homoserine. The sequence is that of Homoserine O-acetyltransferase from Ruegeria pomeroyi (strain ATCC 700808 / DSM 15171 / DSS-3) (Silicibacter pomeroyi).